A 153-amino-acid chain; its full sequence is uncharacterized protein (153 aa).

It localises to the mitochondrion. This is an uncharacterized protein from Arabidopsis thaliana (Mouse-ear cress).